Here is a 382-residue protein sequence, read N- to C-terminus: 1-deoxy-D-xylulose 5-phosphate reductoisomerase (382 aa).

NADPH-binding residues include Thr10, Gly11, Ser12, Ile13, Asn38, and Asn120. Lys121 contributes to the 1-deoxy-D-xylulose 5-phosphate binding site. Glu122 serves as a coordination point for NADPH. Mn(2+) is bound at residue Asp146. The 1-deoxy-D-xylulose 5-phosphate site is built by Ser147, Glu148, Ser172, and His195. Glu148 is a Mn(2+) binding site. Position 201 (Gly201) interacts with NADPH. Ser208, Asn213, Lys214, and Glu217 together coordinate 1-deoxy-D-xylulose 5-phosphate. A Mn(2+)-binding site is contributed by Glu217.

It belongs to the DXR family. Requires Mg(2+) as cofactor. It depends on Mn(2+) as a cofactor.

It catalyses the reaction 2-C-methyl-D-erythritol 4-phosphate + NADP(+) = 1-deoxy-D-xylulose 5-phosphate + NADPH + H(+). The protein operates within isoprenoid biosynthesis; isopentenyl diphosphate biosynthesis via DXP pathway; isopentenyl diphosphate from 1-deoxy-D-xylulose 5-phosphate: step 1/6. Functionally, catalyzes the NADPH-dependent rearrangement and reduction of 1-deoxy-D-xylulose-5-phosphate (DXP) to 2-C-methyl-D-erythritol 4-phosphate (MEP). The polypeptide is 1-deoxy-D-xylulose 5-phosphate reductoisomerase (Thermoanaerobacter pseudethanolicus (strain ATCC 33223 / 39E) (Clostridium thermohydrosulfuricum)).